Consider the following 177-residue polypeptide: Large ribosomal subunit protein uL6 (177 aa).

The protein belongs to the universal ribosomal protein uL6 family. As to quaternary structure, part of the 50S ribosomal subunit.

In terms of biological role, this protein binds to the 23S rRNA, and is important in its secondary structure. It is located near the subunit interface in the base of the L7/L12 stalk, and near the tRNA binding site of the peptidyltransferase center. In Acinetobacter baumannii (strain AB307-0294), this protein is Large ribosomal subunit protein uL6.